The following is a 217-amino-acid chain: uncharacterized protein (217 aa).

The disordered stretch occupies residues 1–32 (MTLKKHRGKMSEKSNVNKKFTNSTQNNSNWSN). The segment covering 22–32 (NSTQNNSNWSN) has biased composition (low complexity).

This is an uncharacterized protein from Acidianus filamentous virus 2 (isolate Italy/Pozzuoli) (AFV-2).